A 124-amino-acid polypeptide reads, in one-letter code: Fluoride-specific ion channel FluC (124 aa).

Transmembrane regions (helical) follow at residues 4-24 (VIFI…LSGW), 32-52 (AFPY…GLIM), 68-88 (GLTI…YETF), and 96-116 (LLIA…FTWL). The Na(+) site is built by Gly75 and Thr78.

This sequence belongs to the fluoride channel Fluc/FEX (TC 1.A.43) family.

Its subcellular location is the cell inner membrane. It catalyses the reaction fluoride(in) = fluoride(out). Na(+) is not transported, but it plays an essential structural role and its presence is essential for fluoride channel function. In terms of biological role, fluoride-specific ion channel. Important for reducing fluoride concentration in the cell, thus reducing its toxicity. In Geotalea daltonii (strain DSM 22248 / JCM 15807 / FRC-32) (Geobacter daltonii), this protein is Fluoride-specific ion channel FluC.